Reading from the N-terminus, the 404-residue chain is Probable mannosyltransferase KTR3 (404 aa).

The Cytoplasmic segment spans residues 1-27 (MSVHHKKKLMPKSALLIRKYQKGIRSS). The chain crosses the membrane as a helical; Signal-anchor for type II membrane protein span at residues 28–44 (FIGLIIVLSFLFFMSGS). The stem region stretch occupies residues 45–83 (RSPEVPIAQGTSVSRVASKDYLMPFTDKSQGVIHPVDDG). Residues 45–404 (RSPEVPIAQG…AGNYKLPPGI (360 aa)) are Lumenal-facing. The tract at residues 84-404 (KKEKGVMVTL…AGNYKLPPGI (321 aa)) is catalytic. The active-site Nucleophile is Glu295.

This sequence belongs to the glycosyltransferase 15 family. In terms of assembly, interacts with SVP26.

It is found in the membrane. Functionally, possible glycosyltransferase that transfers an alpha-D-mannosyl residue from GDP-mannose into lipid-linked oligosaccharide, forming an alpha-(1-&gt;2)-D-mannosyl-D-mannose linkage. This Saccharomyces cerevisiae (strain ATCC 204508 / S288c) (Baker's yeast) protein is Probable mannosyltransferase KTR3 (KTR3).